The primary structure comprises 76 residues: Defensin-like protein 164 (76 aa).

An N-terminal signal peptide occupies residues 1–25; the sequence is MAKLLCSYLFICMFVLSGFLVFSSA. Intrachain disulfides connect C31–C76, C41–C61, C46–C70, and C50–C72.

Belongs to the DEFL family.

The protein resides in the secreted. This is Defensin-like protein 164 (LCR38) from Arabidopsis thaliana (Mouse-ear cress).